Consider the following 469-residue polypeptide: Light-independent protochlorophyllide reductase subunit N (469 aa).

C24, C49, and C109 together coordinate [4Fe-4S] cluster.

The protein belongs to the BchN/ChlN family. As to quaternary structure, protochlorophyllide reductase is composed of three subunits; ChlL, ChlN and ChlB. Forms a heterotetramer of two ChlB and two ChlN subunits. The cofactor is [4Fe-4S] cluster.

It carries out the reaction chlorophyllide a + oxidized 2[4Fe-4S]-[ferredoxin] + 2 ADP + 2 phosphate = protochlorophyllide a + reduced 2[4Fe-4S]-[ferredoxin] + 2 ATP + 2 H2O. Its pathway is porphyrin-containing compound metabolism; chlorophyll biosynthesis (light-independent). Its function is as follows. Component of the dark-operative protochlorophyllide reductase (DPOR) that uses Mg-ATP and reduced ferredoxin to reduce ring D of protochlorophyllide (Pchlide) to form chlorophyllide a (Chlide). This reaction is light-independent. The NB-protein (ChlN-ChlB) is the catalytic component of the complex. This is Light-independent protochlorophyllide reductase subunit N from Synechocystis sp. (strain ATCC 27184 / PCC 6803 / Kazusa).